Consider the following 271-residue polypeptide: Tryptophan synthase alpha chain (271 aa).

Catalysis depends on proton acceptor residues E49 and D60.

This sequence belongs to the TrpA family. As to quaternary structure, tetramer of two alpha and two beta chains.

It carries out the reaction (1S,2R)-1-C-(indol-3-yl)glycerol 3-phosphate + L-serine = D-glyceraldehyde 3-phosphate + L-tryptophan + H2O. The protein operates within amino-acid biosynthesis; L-tryptophan biosynthesis; L-tryptophan from chorismate: step 5/5. Functionally, the alpha subunit is responsible for the aldol cleavage of indoleglycerol phosphate to indole and glyceraldehyde 3-phosphate. The sequence is that of Tryptophan synthase alpha chain from Aromatoleum aromaticum (strain DSM 19018 / LMG 30748 / EbN1) (Azoarcus sp. (strain EbN1)).